The sequence spans 106 residues: Glutaredoxin-1 (106 aa).

Position 2 is an N-acetylalanine (Ala2). The 104-residue stretch at 3-106 (QEFVNCKIQP…TRLKQIGALQ (104 aa)) folds into the Glutaredoxin domain. The residue at position 9 (Lys9) is an N6-succinyllysine. 2 disulfide bridges follow: Cys23-Cys26 and Cys79-Cys83.

It belongs to the glutaredoxin family.

It is found in the cytoplasm. Functionally, has a glutathione-disulfide oxidoreductase activity in the presence of NADPH and glutathione reductase. Reduces low molecular weight disulfides and proteins. This is Glutaredoxin-1 (GLRX) from Homo sapiens (Human).